A 371-amino-acid chain; its full sequence is Methionine import ATP-binding protein MetN (371 aa).

A disordered region spans residues M1–P22. Positions I27–V268 constitute an ABC transporter domain. G65 to S72 contributes to the ATP binding site.

The protein belongs to the ABC transporter superfamily. Methionine importer (TC 3.A.1.24) family. As to quaternary structure, the complex is composed of two ATP-binding proteins (MetN), two transmembrane proteins (MetI) and a solute-binding protein (MetQ).

It localises to the cell inner membrane. It catalyses the reaction L-methionine(out) + ATP + H2O = L-methionine(in) + ADP + phosphate + H(+). It carries out the reaction D-methionine(out) + ATP + H2O = D-methionine(in) + ADP + phosphate + H(+). Its function is as follows. Part of the ABC transporter complex MetNIQ involved in methionine import. Responsible for energy coupling to the transport system. This chain is Methionine import ATP-binding protein MetN, found in Rhodopseudomonas palustris (strain BisB5).